The sequence spans 358 residues: UDP-3-O-acylglucosamine N-acyltransferase (358 aa).

Catalysis depends on H248, which acts as the Proton acceptor.

The protein belongs to the transferase hexapeptide repeat family. LpxD subfamily. In terms of assembly, homotrimer.

It carries out the reaction a UDP-3-O-[(3R)-3-hydroxyacyl]-alpha-D-glucosamine + a (3R)-hydroxyacyl-[ACP] = a UDP-2-N,3-O-bis[(3R)-3-hydroxyacyl]-alpha-D-glucosamine + holo-[ACP] + H(+). It participates in bacterial outer membrane biogenesis; LPS lipid A biosynthesis. Functionally, catalyzes the N-acylation of UDP-3-O-acylglucosamine using 3-hydroxyacyl-ACP as the acyl donor. Is involved in the biosynthesis of lipid A, a phosphorylated glycolipid that anchors the lipopolysaccharide to the outer membrane of the cell. This is UDP-3-O-acylglucosamine N-acyltransferase from Synechococcus sp. (strain WH7803).